Consider the following 462-residue polypeptide: Fasciclin-like arabinogalactan protein 18 (462 aa).

The signal sequence occupies residues 1 to 25 (MDRCIYGCSVITIFFSFFFLLNASA). 3 N-linked (GlcNAc...) asparagine glycosylation sites follow: Asn32, Asn77, and Asn293. FAS1 domains are found at residues 40–185 (NSNS…ERLL) and 271–414 (VKDF…DGVL).

It belongs to the fasciclin-like AGP family.

The protein resides in the secreted. In terms of biological role, may be a cell surface adhesion protein. This chain is Fasciclin-like arabinogalactan protein 18 (FLA18), found in Arabidopsis thaliana (Mouse-ear cress).